The following is a 425-amino-acid chain: Serine--tRNA ligase (425 aa).

An L-serine-binding site is contributed by 228–230 (TAE). 259–261 (RSE) serves as a coordination point for ATP. Glutamate 282 contacts L-serine. 346–349 (EIAS) serves as a coordination point for ATP. Serine 382 is a binding site for L-serine.

This sequence belongs to the class-II aminoacyl-tRNA synthetase family. Type-1 seryl-tRNA synthetase subfamily. Homodimer. The tRNA molecule binds across the dimer.

The protein resides in the cytoplasm. The catalysed reaction is tRNA(Ser) + L-serine + ATP = L-seryl-tRNA(Ser) + AMP + diphosphate + H(+). The enzyme catalyses tRNA(Sec) + L-serine + ATP = L-seryl-tRNA(Sec) + AMP + diphosphate + H(+). It functions in the pathway aminoacyl-tRNA biosynthesis; selenocysteinyl-tRNA(Sec) biosynthesis; L-seryl-tRNA(Sec) from L-serine and tRNA(Sec): step 1/1. Functionally, catalyzes the attachment of serine to tRNA(Ser). Is also able to aminoacylate tRNA(Sec) with serine, to form the misacylated tRNA L-seryl-tRNA(Sec), which will be further converted into selenocysteinyl-tRNA(Sec). This Rickettsia africae (strain ESF-5) protein is Serine--tRNA ligase.